We begin with the raw amino-acid sequence, 529 residues long: Putative E3 ubiquitin-protein ligase ARI4 (529 aa).

Positions methionine 1–aspartate 22 are enriched in acidic residues. A disordered region spans residues methionine 1–histidine 23. The TRIAD supradomain stretch occupies residues lysine 115–lysine 327. Zn(2+) is bound by residues cysteine 119, cysteine 122, cysteine 137, histidine 139, cysteine 142, cysteine 145, cysteine 164, cysteine 169, cysteine 206, cysteine 212, cysteine 230, cysteine 232, cysteine 237, cysteine 240, histidine 245, cysteine 250, cysteine 277, and cysteine 280. An RING-type 1 zinc finger spans residues cysteine 119–cysteine 169. The IBR-type zinc finger occupies glutamate 186 to cysteine 250. The RING-type 2; atypical zinc finger occupies cysteine 277–cysteine 305. Residue cysteine 290 is part of the active site. Cysteine 295, cysteine 297, cysteine 302, cysteine 305, histidine 313, and cysteine 323 together coordinate Zn(2+).

The protein belongs to the RBR family. Ariadne subfamily. It depends on Zn(2+) as a cofactor.

It carries out the reaction [E2 ubiquitin-conjugating enzyme]-S-ubiquitinyl-L-cysteine + [acceptor protein]-L-lysine = [E2 ubiquitin-conjugating enzyme]-L-cysteine + [acceptor protein]-N(6)-ubiquitinyl-L-lysine.. The protein operates within protein modification; protein ubiquitination. Functionally, might act as an E3 ubiquitin-protein ligase, or as part of E3 complex, which accepts ubiquitin from specific E2 ubiquitin-conjugating enzymes and then transfers it to substrates. The protein is Putative E3 ubiquitin-protein ligase ARI4 (ARI4) of Arabidopsis thaliana (Mouse-ear cress).